The following is a 345-amino-acid chain: NADH-quinone oxidoreductase subunit H (345 aa).

At 1 to 15 (MADFWATSLGQTLIL) the chain is on the lumenal side. A helical membrane pass occupies residues 16–35 (LAQGLGIIAFVMIGLLLLVW). Over 36-86 (GDRKIWAAVQMRKGPNVVGAFGLLQSVADAAKYVFKEIVVPAGVDKPVYFL) the chain is Cytoplasmic. The chain crosses the membrane as a helical span at residues 87 to 106 (APMLSLVLALLAWVVVPFNE). Over 107 to 110 (GWVM) the chain is Lumenal. A helical transmembrane segment spans residues 111-130 (ADINVAVLFVFAVSSLEVYG). The Cytoplasmic portion of the chain corresponds to 131–156 (VIMGGWASNSKYPFLGSLRSAAQMIS). A helical membrane pass occupies residues 157 to 176 (YEVSMGLIIVGVIISTGSMN). The Lumenal portion of the chain corresponds to 177-191 (LSAIVEAQRGDFGLL). Residues 192-211 (NWYWLPHLPMVALFFISALA) traverse the membrane as a helical segment. Over 212–245 (ETNRPPFDLPEAESELVAGFMVEYSSTPYLLFMA) the chain is Cytoplasmic. Residues 246–265 (GEYIAVWLMCALTSVLFFGG) form a helical membrane-spanning segment. Residues 266–276 (WLSPIPGVPDG) are Lumenal-facing. A helical membrane pass occupies residues 277–296 (VLWMVAKMAAVFFVFAMVKA). The Cytoplasmic segment spans residues 297–313 (IVPRYRYDQLMRIGWKV). Residues 314–333 (FLPLSLAWVVVVAFLAKFEV) traverse the membrane as a helical segment. Over 334-345 (LGGFWARWSIGA) the chain is Lumenal.

The protein belongs to the complex I subunit 1 family. As to quaternary structure, NDH-1 is composed of 14 different subunits. Subunits NuoA, H, J, K, L, M, N constitute the membrane sector of the complex.

The protein resides in the cellular chromatophore membrane. The catalysed reaction is a quinone + NADH + 5 H(+)(in) = a quinol + NAD(+) + 4 H(+)(out). Its function is as follows. NDH-1 shuttles electrons from NADH, via FMN and iron-sulfur (Fe-S) centers, to quinones in the respiratory chain. The immediate electron acceptor for the enzyme in this species is believed to be ubiquinone. Couples the redox reaction to proton translocation (for every two electrons transferred, four hydrogen ions are translocated across the cytoplasmic membrane), and thus conserves the redox energy in a proton gradient. This subunit may bind ubiquinone. The sequence is that of NADH-quinone oxidoreductase subunit H from Rhodobacter capsulatus (Rhodopseudomonas capsulata).